A 287-amino-acid chain; its full sequence is Protease HtpX (287 aa).

2 consecutive transmembrane segments (helical) span residues 4-24 (IFLLIATNLAVLLVASIVMSI) and 33-53 (GGLLVFAAIFGFGGAFISLAI). Residue His139 coordinates Zn(2+). The active site involves Glu140. His143 serves as a coordination point for Zn(2+). 2 helical membrane-spanning segments follow: residues 154 to 174 (LIQGVVNTFVIFAARVVAGII) and 195 to 215 (AVVFVLDMLFGILASIIVAYF). Residue Glu220 coordinates Zn(2+).

It belongs to the peptidase M48B family. It depends on Zn(2+) as a cofactor.

The protein localises to the cell inner membrane. The protein is Protease HtpX of Shewanella baltica (strain OS185).